A 234-amino-acid polypeptide reads, in one-letter code: Cell polarity protein alp11 (234 aa).

Positions 4–88 constitute a Ubiquitin-like domain; that stretch reads ITLFIKSSSA…IVVEDTRPPH (85 aa). A CAP-Gly domain is found at 174–216; the sequence is VPEINNDNLWVGVEFDEPVGKNDGTVSGKRYFNAKNKHGSFLR. Serine 213 bears the Phosphoserine mark.

The protein belongs to the TBCB family. Binds to monomeric alpha-tubulin. Interacts with alp21.

It localises to the cytoplasm. The protein localises to the cytoskeleton. Required for microtubule function and cell polarity. Involved in the proper folding of alpha-tubulin. In Schizosaccharomyces pombe (strain 972 / ATCC 24843) (Fission yeast), this protein is Cell polarity protein alp11 (alp11).